The sequence spans 95 residues: Large ribosomal subunit protein uL23 (95 aa).

It belongs to the universal ribosomal protein uL23 family. As to quaternary structure, part of the 50S ribosomal subunit. Contacts protein L29, and trigger factor when it is bound to the ribosome.

Functionally, one of the early assembly proteins it binds 23S rRNA. One of the proteins that surrounds the polypeptide exit tunnel on the outside of the ribosome. Forms the main docking site for trigger factor binding to the ribosome. The protein is Large ribosomal subunit protein uL23 of Desulfotalea psychrophila (strain LSv54 / DSM 12343).